The chain runs to 603 residues: Keratin, type II cuticular Hb4 (603 aa).

The tract at residues 1-173 (MSCRSYRVSS…PNAQRVKRDE (173 aa)) is head. The 312-residue stretch at 173–484 (EKEQIKTLNN…RLLEGEEIRI (312 aa)) folds into the IF rod domain. Residues 174 to 208 (KEQIKTLNNKFASFIDKVRFLEQQNKLLETKWSFL) are coil 1A. The tract at residues 209–218 (QEQKCARSNL) is linker 1. Residues 219–319 (EPLFDNYITN…YHEEIEMLQS (101 aa)) are coil 1B. The segment at 320 to 336 (HISETSVIVKMDNSRDL) is linker 12. The tract at residues 337 to 480 (NLDGIIAEVK…VTYRRLLEGE (144 aa)) is coil 2. Residues 481–603 (EIRICEGVGP…STTTSRRTRY (123 aa)) form a tail region. The tract at residues 579–603 (CSGGRGNRSSSVRFSSTTTSRRTRY) is disordered.

Belongs to the intermediate filament family. As to quaternary structure, heterotetramer of two type I and two type II keratins. In terms of tissue distribution, in skin, only expressed in the suprabasal cells of tail scale epidermis. Suprabasally expressed in stratified squamous epithelia and also in the posterior unit of the complex filiform papillae of tongue. Expressed in rare anatomical sites in which an orthokeratinized stratum corneum would be too soft and a hard keratinized structure would be too rigid to meet the functional requirement of the respective epithelia.

The sequence is that of Keratin, type II cuticular Hb4 (Krt84) from Mus musculus (Mouse).